Reading from the N-terminus, the 143-residue chain is Nucleoside diphosphate kinase (143 aa).

Residues lysine 11, phenylalanine 59, arginine 87, threonine 93, arginine 104, and asparagine 114 each contribute to the ATP site. The active-site Pros-phosphohistidine intermediate is the histidine 117.

It belongs to the NDK family. Homotetramer. It depends on Mg(2+) as a cofactor.

The protein resides in the cytoplasm. It catalyses the reaction a 2'-deoxyribonucleoside 5'-diphosphate + ATP = a 2'-deoxyribonucleoside 5'-triphosphate + ADP. The enzyme catalyses a ribonucleoside 5'-diphosphate + ATP = a ribonucleoside 5'-triphosphate + ADP. Functionally, major role in the synthesis of nucleoside triphosphates other than ATP. The ATP gamma phosphate is transferred to the NDP beta phosphate via a ping-pong mechanism, using a phosphorylated active-site intermediate. In Shewanella piezotolerans (strain WP3 / JCM 13877), this protein is Nucleoside diphosphate kinase.